The sequence spans 126 residues: Holo-[acyl-carrier-protein] synthase (126 aa).

Asp-6 and Glu-55 together coordinate Mg(2+).

This sequence belongs to the P-Pant transferase superfamily. AcpS family. The cofactor is Mg(2+).

The protein resides in the cytoplasm. It carries out the reaction apo-[ACP] + CoA = holo-[ACP] + adenosine 3',5'-bisphosphate + H(+). Its function is as follows. Transfers the 4'-phosphopantetheine moiety from coenzyme A to a Ser of acyl-carrier-protein. The polypeptide is Holo-[acyl-carrier-protein] synthase (Chlorobium limicola (strain DSM 245 / NBRC 103803 / 6330)).